We begin with the raw amino-acid sequence, 933 residues long: Valine--tRNA ligase (933 aa).

Residues 1-24 are disordered; the sequence is MIERVKTTKLSEASGLPKTYDPVG. The 'HIGH' region motif lies at 57 to 67; it reads PNVTGSLHMGH. Positions 557 to 561 match the 'KMSKS' region motif; the sequence is KMSKS. Lys560 lines the ATP pocket. Positions 866–932 form a coiled coil; that stretch reads LIDIASLRSR…RLVKERLMGL (67 aa).

It belongs to the class-I aminoacyl-tRNA synthetase family. ValS type 1 subfamily. In terms of assembly, monomer.

It is found in the cytoplasm. It catalyses the reaction tRNA(Val) + L-valine + ATP = L-valyl-tRNA(Val) + AMP + diphosphate. Catalyzes the attachment of valine to tRNA(Val). As ValRS can inadvertently accommodate and process structurally similar amino acids such as threonine, to avoid such errors, it has a 'posttransfer' editing activity that hydrolyzes mischarged Thr-tRNA(Val) in a tRNA-dependent manner. This Prochlorococcus marinus (strain NATL2A) protein is Valine--tRNA ligase.